The chain runs to 888 residues: Protein translocase subunit SecA (888 aa).

Residues Gln81, 99-103 (GEGKT), and Asp489 contribute to the ATP site.

The protein belongs to the SecA family.

It is found in the plastid. It localises to the chloroplast stroma. The protein resides in the chloroplast thylakoid membrane. The catalysed reaction is ATP + H2O + cellular proteinSide 1 = ADP + phosphate + cellular proteinSide 2.. Functionally, has a central role in coupling the hydrolysis of ATP to the transfer of proteins across the thylakoid membrane. The protein is Protein translocase subunit SecA of Trieres chinensis (Marine centric diatom).